The following is a 257-amino-acid chain: ATP synthase subunit a (257 aa).

A propeptide spans 1-8 (MRHLDFVL) (removed in mature form). 7 consecutive transmembrane segments (helical) span residues 34-54 (LTNI…YSLL), 93-113 (FFPL…IGLV), 122-142 (HFIL…ILGF), 149-169 (FFSL…LVLI), 187-207 (ANIL…YNIM), 210-230 (GIIF…FSGL), and 231-251 (ELAI…SYIK).

The protein belongs to the ATPase A chain family. In terms of assembly, F-type ATPases have 2 components, CF(1) - the catalytic core - and CF(0) - the membrane proton channel. CF(1) has five subunits: alpha(3), beta(3), gamma(1), delta(1), epsilon(1). CF(0) has three main subunits: a, b and c.

It localises to the mitochondrion inner membrane. Functionally, mitochondrial membrane ATP synthase (F(1)F(0) ATP synthase or Complex V) produces ATP from ADP in the presence of a proton gradient across the membrane which is generated by electron transport complexes of the respiratory chain. F-type ATPases consist of two structural domains, F(1) - containing the extramembraneous catalytic core and F(0) - containing the membrane proton channel, linked together by a central stalk and a peripheral stalk. During catalysis, ATP synthesis in the catalytic domain of F(1) is coupled via a rotary mechanism of the central stalk subunits to proton translocation. Key component of the proton channel; it may play a direct role in the translocation of protons across the membrane. This chain is ATP synthase subunit a (atp6), found in Penicillium chrysogenum (Penicillium notatum).